A 682-amino-acid polypeptide reads, in one-letter code: TBC1 domain family member 23 (682 aa).

One can recognise a Rab-GAP TBC domain in the interval 29-210 (PVPCDLRTKV…AIWDNYLQQA (182 aa)). A Rhodanese domain is found at 318 to 426 (DGVRFFVVDC…GFMALQQHLA (109 aa)).

It localises to the golgi apparatus. The protein resides in the trans-Golgi network. It is found in the cytoplasmic vesicle. In terms of biological role, putative Rab GTPase-activating protein which plays a role in vesicular trafficking. Involved in endosome-to-Golgi trafficking. Acts as a bridging protein by binding simultaneously to golgins, located at the trans-Golgi, and to the WASH complex, located on endosome-derived vesicles. Plays a role in brain development. May act as a general inhibitor of innate immunity signaling. The polypeptide is TBC1 domain family member 23 (tbc1d23) (Xenopus laevis (African clawed frog)).